A 395-amino-acid chain; its full sequence is Elongation factor Tu (395 aa).

Residues K10 to Q204 form the tr-type G domain. Residues G19 to T26 form a G1 region. Position 19-26 (G19–T26) interacts with GTP. T26 serves as a coordination point for Mg(2+). Positions G60–N64 are G2. Residues D81–G84 form a G3 region. GTP contacts are provided by residues D81–H85 and N136–D139. A G4 region spans residues N136–D139. Positions S174–L176 are G5.

This sequence belongs to the TRAFAC class translation factor GTPase superfamily. Classic translation factor GTPase family. EF-Tu/EF-1A subfamily. In terms of assembly, monomer.

Its subcellular location is the cytoplasm. It carries out the reaction GTP + H2O = GDP + phosphate + H(+). In terms of biological role, GTP hydrolase that promotes the GTP-dependent binding of aminoacyl-tRNA to the A-site of ribosomes during protein biosynthesis. The sequence is that of Elongation factor Tu from Symbiobacterium thermophilum (strain DSM 24528 / JCM 14929 / IAM 14863 / T).